Consider the following 297-residue polypeptide: Zinc finger protein 784 (297 aa).

Over residues 1-12 the composition is skewed to pro residues; the sequence is MAAARPDPPIPS. Residues 1-39 form a disordered region; that stretch reads MAAARPDPPIPSSPTRESPSPEPPDLVLVPDGRPVTPPG. Ser-13 carries the phosphoserine modification. C2H2-type zinc fingers lie at residues 64–86, 100–122, and 128–150; these read FHCALCPAAFRLVSELLFHEHGH, SRCHVCGHSCPGPASLRAHYSLH, and YRCSLCPRAFKALAPLLRHQHRH. The segment at 149–175 is disordered; the sequence is RHGVEPGTSERLLPTTTTGQPNSRVAQ. Residues 162–173 show a composition bias toward polar residues; it reads PTTTTGQPNSRV. 3 C2H2-type zinc fingers span residues 195–217, 223–245, and 251–273; these read FACRFCAKPFRRSSDMRDHERVH, YHCSICGKGFTQSSVLSGHARIH, and FRCMLCDRTFNNSSNFRKHQRTH. Residues 268–297 are disordered; sequence KHQRTHFHGPGSGVGESRGQLRSSSVSQES. The segment covering 287–297 has biased composition (polar residues); it reads QLRSSSVSQES.

It belongs to the krueppel C2H2-type zinc-finger protein family.

Its subcellular location is the nucleus. May be involved in transcriptional regulation. This chain is Zinc finger protein 784 (Znf784), found in Mus musculus (Mouse).